Consider the following 397-residue polypeptide: F-box protein At5g25290 (397 aa).

The F-box domain occupies 11–56 (VTLWSEIPMDILRSVFERLSFVDLHRAKIVCSHWYSCSKQSFLRKT).

This chain is F-box protein At5g25290, found in Arabidopsis thaliana (Mouse-ear cress).